Consider the following 315-residue polypeptide: Thymidylate synthase (315 aa).

Residues Arg22 and 177–178 (RR) each bind dUMP. The active-site Nucleophile is the Cys197. DUMP-binding positions include 217 to 220 (RSAD), Asn228, and 258 to 260 (HLY). A (6R)-5,10-methylene-5,6,7,8-tetrahydrofolate-binding site is contributed by Asp220. A (6R)-5,10-methylene-5,6,7,8-tetrahydrofolate-binding site is contributed by Ala314.

This sequence belongs to the thymidylate synthase family. Bacterial-type ThyA subfamily. Homodimer.

It localises to the cytoplasm. The enzyme catalyses dUMP + (6R)-5,10-methylene-5,6,7,8-tetrahydrofolate = 7,8-dihydrofolate + dTMP. Its pathway is pyrimidine metabolism; dTTP biosynthesis. Its function is as follows. Catalyzes the reductive methylation of 2'-deoxyuridine-5'-monophosphate (dUMP) to 2'-deoxythymidine-5'-monophosphate (dTMP) while utilizing 5,10-methylenetetrahydrofolate (mTHF) as the methyl donor and reductant in the reaction, yielding dihydrofolate (DHF) as a by-product. This enzymatic reaction provides an intracellular de novo source of dTMP, an essential precursor for DNA biosynthesis. The polypeptide is Thymidylate synthase (Enterococcus faecalis (strain ATCC 700802 / V583)).